The primary structure comprises 369 residues: Probable dual-specificity RNA methyltransferase RlmN (369 aa).

The active-site Proton acceptor is glutamate 98. The Radical SAM core domain maps to 106–341; that stretch reads STSRNTLCIS…VTVRKSRGAD (236 aa). A disulfide bridge connects residues cysteine 113 and cysteine 346. Residues cysteine 120, cysteine 124, and cysteine 127 each contribute to the [4Fe-4S] cluster site. S-adenosyl-L-methionine is bound by residues 171 to 172, serine 204, 227 to 229, and asparagine 303; these read GE and SLH. The S-methylcysteine intermediate role is filled by cysteine 346.

This sequence belongs to the radical SAM superfamily. RlmN family. The cofactor is [4Fe-4S] cluster.

The protein resides in the cytoplasm. The catalysed reaction is adenosine(2503) in 23S rRNA + 2 reduced [2Fe-2S]-[ferredoxin] + 2 S-adenosyl-L-methionine = 2-methyladenosine(2503) in 23S rRNA + 5'-deoxyadenosine + L-methionine + 2 oxidized [2Fe-2S]-[ferredoxin] + S-adenosyl-L-homocysteine. It catalyses the reaction adenosine(37) in tRNA + 2 reduced [2Fe-2S]-[ferredoxin] + 2 S-adenosyl-L-methionine = 2-methyladenosine(37) in tRNA + 5'-deoxyadenosine + L-methionine + 2 oxidized [2Fe-2S]-[ferredoxin] + S-adenosyl-L-homocysteine. In terms of biological role, specifically methylates position 2 of adenine 2503 in 23S rRNA and position 2 of adenine 37 in tRNAs. In Chloroherpeton thalassium (strain ATCC 35110 / GB-78), this protein is Probable dual-specificity RNA methyltransferase RlmN.